The primary structure comprises 445 residues: 3-phosphoshikimate 1-carboxyvinyltransferase (445 aa).

The interval 1-25 is disordered; that stretch reads MSHSDQTSPLEARKSAALSGTARVP. Residues Lys28, Ser29, and Arg33 each coordinate 3-phosphoshikimate. Lys28 serves as a coordination point for phosphoenolpyruvate. Positions 101 and 129 each coordinate phosphoenolpyruvate. 3-phosphoshikimate is bound by residues Ser175, Gln177, Asp328, and Lys355. Residue Gln177 participates in phosphoenolpyruvate binding. Asp328 (proton acceptor) is an active-site residue. Positions 359 and 402 each coordinate phosphoenolpyruvate.

This sequence belongs to the EPSP synthase family. In terms of assembly, monomer.

It is found in the cytoplasm. It carries out the reaction 3-phosphoshikimate + phosphoenolpyruvate = 5-O-(1-carboxyvinyl)-3-phosphoshikimate + phosphate. Its pathway is metabolic intermediate biosynthesis; chorismate biosynthesis; chorismate from D-erythrose 4-phosphate and phosphoenolpyruvate: step 6/7. In terms of biological role, catalyzes the transfer of the enolpyruvyl moiety of phosphoenolpyruvate (PEP) to the 5-hydroxyl of shikimate-3-phosphate (S3P) to produce enolpyruvyl shikimate-3-phosphate and inorganic phosphate. The protein is 3-phosphoshikimate 1-carboxyvinyltransferase of Rhodopseudomonas palustris (strain BisB5).